A 247-amino-acid chain; its full sequence is MAIALVTGGSRGIGRATALLLAQEGYTVAVNYQQNLHAAQEVMNLITQAGGKAFVLQADISDENQVVAMFTAIDQHDEPLAALVNNAGILFTQCTVENLTAERINRVLSTNVTGYFLCCREAVKRMALKNGGSGGAIVNVSSVASRLGSPGEYVDYAASKGAIDTLTTGLSLEVAAQGIRVNCVRPGFIYTEMHASGGEPGRVDRVKSNIPMQRGGQAEEVAQAIVWLLSDKASYVTGSFIDLAGGK.

4–28 (ALVTGGSRGIGRATALLLAQEGYTV) is a binding site for NADP(+). Residue Ser-142 coordinates substrate. The Proton acceptor role is filled by Tyr-156.

It belongs to the short-chain dehydrogenases/reductases (SDR) family.

This is an uncharacterized protein from Escherichia coli (strain K12).